A 167-amino-acid polypeptide reads, in one-letter code: Signal peptidase complex catalytic subunit SEC11 (167 aa).

Residues 1–12 (MNIRHQLVQFLN) are Cytoplasmic-facing. The chain crosses the membrane as a helical; Signal-anchor for type II membrane protein span at residues 13–30 (LALVLSSAFMAWKTLSVI). Topologically, residues 31-167 (TNSHSPIVVV…MGISSLLSNE (137 aa)) are lumenal. Catalysis depends on charge relay system residues Ser44, His83, and Asp109. The interval 153 to 164 (TLLGLMGISSLL) is C-terminal short (CTS) helix.

The protein belongs to the peptidase S26B family. As to quaternary structure, component of the signal peptidase complex (SPC) composed of a catalytic subunit SEC11 and three accessory subunits SPC1, SPC2 and SPC3. The complex induces a local thinning of the ER membrane which is used to measure the length of the signal peptide (SP) h-region of protein substrates. This ensures the selectivity of the complex towards h-regions shorter than 18-20 amino acids. SPC associates with the translocon complex.

It localises to the endoplasmic reticulum membrane. It carries out the reaction Cleavage of hydrophobic, N-terminal signal or leader sequences from secreted and periplasmic proteins.. Catalytic component of the signal peptidase complex (SPC) which catalyzes the cleavage of N-terminal signal sequences from nascent proteins as they are translocated into the lumen of the endoplasmic reticulum. Specifically cleaves N-terminal signal peptides that contain a hydrophobic alpha-helix (h-region) shorter than 18-20 amino acids. The protein is Signal peptidase complex catalytic subunit SEC11 (SEC11) of Debaryomyces hansenii (strain ATCC 36239 / CBS 767 / BCRC 21394 / JCM 1990 / NBRC 0083 / IGC 2968) (Yeast).